Reading from the N-terminus, the 157-residue chain is Small ribosomal subunit protein uS7 (157 aa).

The protein belongs to the universal ribosomal protein uS7 family. In terms of assembly, part of the 30S ribosomal subunit. Contacts proteins S9 and S11.

Its function is as follows. One of the primary rRNA binding proteins, it binds directly to 16S rRNA where it nucleates assembly of the head domain of the 30S subunit. Is located at the subunit interface close to the decoding center, probably blocks exit of the E-site tRNA. This Leptospira borgpetersenii serovar Hardjo-bovis (strain JB197) protein is Small ribosomal subunit protein uS7.